Consider the following 485-residue polypeptide: Aprataxin and PNK-like factor (485 aa).

Residues 1–84 (MSGGFELQPQ…CVLSTHSEME (84 aa)) form the FHA-like domain. S92 bears the Phosphoserine; by ATM mark. Residues 103–156 (EIPKSSSADLPDKTPSAPRRERSTETAKPQAAANNMSFIGESRDLSKQQPNPSE) are disordered. S125 bears the Phosphoserine mark. The KBM signature appears at 157 to 166 (RKRILPAWML). Positions 206–348 (GKKRLISSGS…VPNGSEENKV (143 aa)) are disordered. Polar residues-rich tracts occupy residues 212-223 (SSGSSESTSAKQ), 237-249 (SIISSKEMPQSFS), and 286-309 (KGSSNEDSTARSCSESYSSTQSKS). Residues 310-319 (FCDKPQKSHP) are compositionally biased toward basic and acidic residues. Residues R350, Y355, Y360, and R361 each contribute to the a glycoprotein site. Residues 351–372 (TSCMYGANCYRKNPVHFQHFSH) form a PBZ-type 1 zinc finger. The flexible linker stretch occupies residues 380–390 (GVNITCQDEAD). Residues 393–414 (PECPYGASCYRKNPQHKIEYRH) form a PBZ-type 2 zinc finger. The a glycoprotein site is built by Y397, Y402, and R403. Positions 420–470 (RSISDEDDNVGQPNEYNLNDSFIDDEEEEYEPTDEDSDWEPEKEDLEKEDM) are disordered. Residues 441–469 (FIDDEEEEYEPTDEDSDWEPEKEDLEKED) show a composition bias toward acidic residues. Residues 449 to 473 (YEPTDEDSDWEPEKEDLEKEDMEGL) carry the NAP1L motif motif.

It belongs to the APLF family. As to quaternary structure, interacts with LIG4. Interacts with PARP1. Interacts with XRCC4. Interacts (via KBM motif) with XRCC5 and XRCC6; promoting recruitment to DNA damage sites. Interacts with XRCC1. Interacts (via C-terminal disordered region) with histones; interacts with histone H2A, H2B and H3-H4. Poly-ADP-ribosylated. In addition to binding non covalently poly-ADP-ribose via its PBZ-type zinc fingers, the protein is also covalently poly-ADP-ribosylated by PARP1. Post-translationally, phosphorylated in an ATM-dependent manner upon double-strand DNA break.

The protein localises to the nucleus. Its subcellular location is the chromosome. It is found in the cytoplasm. It localises to the cytosol. Histone chaperone involved in single-strand and double-strand DNA break repair. Recruited to sites of DNA damage through interaction with branched poly-ADP-ribose chains, a polymeric post-translational modification synthesized transiently at sites of chromosomal damage to accelerate DNA strand break repair reactions. Following recruitment to DNA damage sites, acts as a histone chaperone that mediates histone eviction during DNA repair and promotes recruitment of histone variant MACROH2A1. Also has a nuclease activity: displays apurinic-apyrimidinic (AP) endonuclease and 3'-5' exonuclease activities in vitro. Also able to introduce nicks at hydroxyuracil and other types of pyrimidine base damage. Together with PARP3, promotes the retention of the LIG4-XRCC4 complex on chromatin and accelerate DNA ligation during non-homologous end-joining (NHEJ). Also acts as a negative regulator of cell pluripotency by promoting histone exchange. Required for the embryo implantation during the epithelial to mesenchymal transition in females. The polypeptide is Aprataxin and PNK-like factor (APLF) (Bos taurus (Bovine)).